The chain runs to 715 residues: Protein Hook homolog 1 (715 aa).

Residues 6–122 form the Calponin-homology (CH) domain; the sequence is TVLCESLIIW…RLLQLILGCA (117 aa). Coiled-coil stretches lie at residues 167–434 and 463–656; these read AGDT…DQLL and IRLQ…EEKL.

It belongs to the hook family. As to quaternary structure, interacts with microtubules.

It localises to the cytoplasm. Its subcellular location is the cytoskeleton. Functionally, may function to promote vesicle trafficking and/or fusion. The polypeptide is Protein Hook homolog 1 (hook1) (Danio rerio (Zebrafish)).